Reading from the N-terminus, the 160-residue chain is SsrA-binding protein (160 aa).

A disordered region spans residues 131-160 (KKEYDKRDTEKARDSDREIQRAIRSKGKED).

This sequence belongs to the SmpB family.

It localises to the cytoplasm. In terms of biological role, required for rescue of stalled ribosomes mediated by trans-translation. Binds to transfer-messenger RNA (tmRNA), required for stable association of tmRNA with ribosomes. tmRNA and SmpB together mimic tRNA shape, replacing the anticodon stem-loop with SmpB. tmRNA is encoded by the ssrA gene; the 2 termini fold to resemble tRNA(Ala) and it encodes a 'tag peptide', a short internal open reading frame. During trans-translation Ala-aminoacylated tmRNA acts like a tRNA, entering the A-site of stalled ribosomes, displacing the stalled mRNA. The ribosome then switches to translate the ORF on the tmRNA; the nascent peptide is terminated with the 'tag peptide' encoded by the tmRNA and targeted for degradation. The ribosome is freed to recommence translation, which seems to be the essential function of trans-translation. The chain is SsrA-binding protein from Azotobacter vinelandii (strain DJ / ATCC BAA-1303).